We begin with the raw amino-acid sequence, 137 residues long: Chaperone protein YscB (137 aa).

Interacts with SycN to form a complex which specifically binds to YopN.

The protein localises to the cytoplasm. The protein resides in the cell inner membrane. In terms of biological role, functions as a specific chaperone for YopN. It could facilitate the secretion and the subsequent translocation of YopN. This chain is Chaperone protein YscB (yscB), found in Yersinia enterocolitica.